The following is a 471-amino-acid chain: Abscisic acid 8'-hydroxylase 1 (471 aa).

Residues 1 to 21 (MGAFLLFVCVLAPFLLVCAVR) form a helical membrane-spanning segment. Residue Cys415 coordinates heme.

The protein belongs to the cytochrome P450 family. The cofactor is heme. In terms of tissue distribution, in seedlings and expanding leaves.

The protein resides in the membrane. The enzyme catalyses 2-cis-(+)-abscisate + reduced [NADPH--hemoprotein reductase] + O2 = (+)-8'-hydroxyabscisate + oxidized [NADPH--hemoprotein reductase] + H2O + H(+). The protein operates within plant hormone degradation; abscisic acid degradation. Its function is as follows. Involved in the oxidative degradation of abscisic acid. The protein is Abscisic acid 8'-hydroxylase 1 (CYP707A5) of Oryza sativa subsp. indica (Rice).